The sequence spans 218 residues: ATP phosphoribosyltransferase (218 aa).

This sequence belongs to the ATP phosphoribosyltransferase family. Short subfamily. As to quaternary structure, heteromultimer composed of HisG and HisZ subunits.

The protein resides in the cytoplasm. The enzyme catalyses 1-(5-phospho-beta-D-ribosyl)-ATP + diphosphate = 5-phospho-alpha-D-ribose 1-diphosphate + ATP. It participates in amino-acid biosynthesis; L-histidine biosynthesis; L-histidine from 5-phospho-alpha-D-ribose 1-diphosphate: step 1/9. Catalyzes the condensation of ATP and 5-phosphoribose 1-diphosphate to form N'-(5'-phosphoribosyl)-ATP (PR-ATP). Has a crucial role in the pathway because the rate of histidine biosynthesis seems to be controlled primarily by regulation of HisG enzymatic activity. The polypeptide is ATP phosphoribosyltransferase (Burkholderia mallei (strain ATCC 23344)).